We begin with the raw amino-acid sequence, 344 residues long: Serine proteinase inhibitor 2 (344 aa).

This sequence belongs to the serpin family. Poxviruses subfamily.

It is found in the host cytoplasm. Functionally, viral serpin that inhibits both cysteine and serine proteinases involved in the regulation of host inflammatory and apoptosis processes. Major anti-apoptotic protein which inhibits both intrinsic and extrinsic pathways and strongly cleaves host CASP1 and CASP8 but is a rather poor inhibitor of host CASP3. Prevents the proteolytic activity of host interleukin-1-beta converting enzyme (ICE) and ICE-like enzymes. Can also block apoptosis through host tumor necrosis factor (TNF) receptor. The inhibition of host ICE is an example of a 'cross-class' interaction, in which a serpin inhibits a non-serine proteinase. Also inhibits granzyme B. This Homo sapiens (Human) protein is Serine proteinase inhibitor 2 (OPG199).